The primary structure comprises 436 residues: MQPPPDEARRDMAGDTQWSRPECQAWTGTLLLGTCLLYCARSSMPICTVSMSQDFGWNKKEAGIVLSSFFWGYCLTQVVGGHLGDRIGGEKVILLSASAWGSITAVTPLLAHLSSAHLAFMTFSRILMGLLQGVYFPALTSLLSQKVRESERAFTYSIVGAGSQFGTLLTGAVGSLLLEWYGWQSIFYFSGGLTLLWVWYVYRYLLSEKDLILALGVLAQSRPVSRHNRVPWRRLFRKPAVWAAVVSQLSAACSFFILLSWLPTFFEETFPDAKGWIFNVVPWLVAIPASLFSGFLSDHLINQGYRAITVRKLMQGMGLGLSSVFALCLGHTSSFCESVVFASASIGLQTFNHSGISVNIQDLAPSCAGFLFGVANTAGALAGVVGVCLGGYLMETTGSWTCLFNLVAIISNLGLCTFLVFGQAQRVDLSSTHEDL.

The next 10 membrane-spanning stretches (helical) occupy residues 64-84 (IVLS…GHLG), 92-112 (VILL…LLAH), 118-138 (LAFM…YFPA), 158-178 (IVGA…SLLL), 181-201 (YGWQ…VWYV), 239-259 (PAVW…FILL), 276-296 (WIFN…SGFL), 316-336 (GMGL…SSFC), 369-389 (GFLF…GVCL), and 402-422 (CLFN…LVFG).

It belongs to the major facilitator superfamily. Sodium/anion cotransporter family. In terms of tissue distribution, widely expressed, but more predominantly in adrenal gland, brain and thyroid.

Its subcellular location is the cytoplasmic vesicle. It localises to the secretory vesicle. The protein localises to the chromaffin granule membrane. It is found in the secretory vesicle membrane. The protein resides in the lysosome membrane. It carries out the reaction ATP(in) = ATP(out). It catalyses the reaction ADP(in) = ADP(out). The catalysed reaction is GTP(in) = GTP(out). With respect to regulation, activity is chloride-dependent. Inhibited by AMP-PNP, gammaS-ATP, diadenosine triphosphate, 4,4'- diisothiocyanatostilbene-2,2'-disulfonate (DIDS) and Evans blue. Functionally, voltage-gated ATP nucleotide uniporter that can also transport the purine nucleotides ADP and GTP. Uses the membrane potential as the driving force to control ATP accumulation in lysosomes and secretory vesicles. By controlling ATP storage in lysosomes, regulates ATP-dependent proteins of these organelles. Also indirectly regulates the exocytosis of ATP through its import into lysosomes in astrocytes and secretory vesicles such as adrenal chromaffin granules, mucin granules and synaptic vesicles. The chain is Voltage-gated purine nucleotide uniporter SLC17A9 from Homo sapiens (Human).